We begin with the raw amino-acid sequence, 280 residues long: Bifunctional protein FolD (280 aa).

NADP(+) contacts are provided by residues 166-168 (GRS) and S191.

The protein belongs to the tetrahydrofolate dehydrogenase/cyclohydrolase family. In terms of assembly, homodimer.

It carries out the reaction (6R)-5,10-methylene-5,6,7,8-tetrahydrofolate + NADP(+) = (6R)-5,10-methenyltetrahydrofolate + NADPH. The enzyme catalyses (6R)-5,10-methenyltetrahydrofolate + H2O = (6R)-10-formyltetrahydrofolate + H(+). The protein operates within one-carbon metabolism; tetrahydrofolate interconversion. Catalyzes the oxidation of 5,10-methylenetetrahydrofolate to 5,10-methenyltetrahydrofolate and then the hydrolysis of 5,10-methenyltetrahydrofolate to 10-formyltetrahydrofolate. In Saccharophagus degradans (strain 2-40 / ATCC 43961 / DSM 17024), this protein is Bifunctional protein FolD.